The sequence spans 160 residues: Calsequestrin-2 (160 aa).

This sequence belongs to the calsequestrin family. Monomer, homodimer and homooligomer. Mostly monomeric in the absence of calcium. Forms higher oligomers in a calcium-dependent manner. Dimers associate to form tetramers, that then form linear homomer chains. Interacts with ASPH and TRDN. Post-translationally, phosphorylation in the C-terminus, probably by CK2, moderately increases calcium buffering capacity. N-glycosylated.

The protein resides in the sarcoplasmic reticulum lumen. Its function is as follows. Calsequestrin is a high-capacity, moderate affinity, calcium-binding protein and thus acts as an internal calcium store in muscle. Calcium ions are bound by clusters of acidic residues at the protein surface, especially at the interface between subunits. Can bind around 60 Ca(2+) ions. Regulates the release of lumenal Ca(2+) via the calcium release channel RYR2; this plays an important role in triggering muscle contraction. Plays a role in excitation-contraction coupling in the heart and in regulating the rate of heart beats. This is Calsequestrin-2 (CASQ2) from Sus scrofa (Pig).